A 367-amino-acid chain; its full sequence is Polygalacturonase (367 aa).

An N-terminal signal peptide occupies residues 1-18 (MRTSFVTMLALGAAAVSA). Cysteine 34 and cysteine 49 are disulfide-bonded. 5 PbH1 repeats span residues 161–191 (ADRLTLDHITIDNSEGDAKGGHNTDAFDVGS), 192–213 (STFITISNANIKNQDDCLAINS), 214–234 (GSNIKFVGGTCSGGHGISIGS), 243–264 (VKDVTISDSTVINSDNGVRVKT), and 272–294 (VSGVTFSNIKLSNIAKYGIVIEQ). The active-site Proton donor is aspartate 206. Cysteine 208 and cysteine 224 form a disulfide bridge. The active site involves histidine 228. 2 N-linked (GlcNAc...) asparagine glycosylation sites follow: asparagine 318 and asparagine 336. Cystine bridges form between cysteine 334-cysteine 339 and cysteine 358-cysteine 367.

Belongs to the glycosyl hydrolase 28 family.

It is found in the secreted. The enzyme catalyses (1,4-alpha-D-galacturonosyl)n+m + H2O = (1,4-alpha-D-galacturonosyl)n + (1,4-alpha-D-galacturonosyl)m.. The sequence is that of Polygalacturonase (PG1) from Penicillium digitatum (Green mold).